We begin with the raw amino-acid sequence, 124 residues long: Mini zinc finger protein 4 (124 aa).

A ZF-HD dimerization-type; degenerate zinc finger spans residues 35–84 (YGECRRNHAARMGGHAVDGCREFLAEGEEGTGGALRCAACGCHRSFHRRV).

Homo- and heterodimers.

It is found in the cytoplasm. In terms of biological role, inhibits zinc finger homeodomain (ZHD) transcription factors, by interacting with them to prevent both their nuclear localization and their DNA-binding properties. The protein is Mini zinc finger protein 4 (MIF4) of Oryza sativa subsp. japonica (Rice).